A 92-amino-acid polypeptide reads, in one-letter code: Defensin alpha 4 (92 aa).

The first 19 residues, 1-19, serve as a signal peptide directing secretion; that stretch reads MKTLVLLSALVLLAFQVQA. A propeptide spanning residues 20–58 is cleaved from the precursor; the sequence is DPIQNTDEETKTEEQPGEEDQAVSISFGGQEGSALHEKS. Residues 23–42 are disordered; the sequence is QNTDEETKTEEQPGEEDQAV. Intrachain disulfides connect C64-C89, C66-C81, and C71-C88.

The protein belongs to the alpha-defensin family. Paneth cells of the small bowel.

Its subcellular location is the secreted. It localises to the cytoplasmic vesicle. The protein resides in the secretory vesicle. In terms of biological role, host-defense peptide that has antimicrobial activity. Exhibits activity against Gram-negative E.coli (in vitro). Probably contributes to the antimicrobial barrier function of the small bowel mucosa. In Mus musculus (Mouse), this protein is Defensin alpha 4.